Reading from the N-terminus, the 416-residue chain is MRVYLVGGAVRDRLLNFPVKERDWVVVGGTSEALLSLGYQQVGKDFPVFLHPQTHEEYALARTERKSGLGYTGFTCYAAPDVTLEDDLQRRDLTVNAIAQTPTGELVDPYHGVDDLNNRILRHVSDAFSEDPLRVLRVARFAARFAHLGFTIASETQALMSNMAINGELSVLTPERVWKETEKALASPSPQVFFQVLRDCGALAVLFPEIDNLFGVPAPEKWHPEIDTGIHTLMVLKVATELTDEVDSRFAALCHDLGKGLTPPEQWPHHYGHGPAGVKLVDQLCQRLRVPNSARDLAKLAAQYHDLVHTVTQLRPKTLLKLFDAVDAWRKPQRIEQLIIISEADARGRTGFENTPYPQGDCLRQAFKVASQVQVKNIVDSGLRGADIGHELRRQRQHALAQWKQQDDTAQDNTVT.

ATP contacts are provided by Gly-8 and Arg-11. CTP-binding residues include Gly-8 and Arg-11. 2 residues coordinate Mg(2+): Glu-21 and Asp-23. 3 residues coordinate ATP: Arg-91, Arg-137, and Arg-140. The CTP site is built by Arg-91, Arg-137, and Arg-140. An HD domain is found at 228-329 (TGIHTLMVLK…LKLFDAVDAW (102 aa)).

The protein belongs to the tRNA nucleotidyltransferase/poly(A) polymerase family. Bacterial CCA-adding enzyme type 1 subfamily. In terms of assembly, monomer. Can also form homodimers and oligomers. The cofactor is Mg(2+). Ni(2+) is required as a cofactor.

The enzyme catalyses a tRNA precursor + 2 CTP + ATP = a tRNA with a 3' CCA end + 3 diphosphate. The catalysed reaction is a tRNA with a 3' CCA end + 2 CTP + ATP = a tRNA with a 3' CCACCA end + 3 diphosphate. In terms of biological role, catalyzes the addition and repair of the essential 3'-terminal CCA sequence in tRNAs without using a nucleic acid template. Adds these three nucleotides in the order of C, C, and A to the tRNA nucleotide-73, using CTP and ATP as substrates and producing inorganic pyrophosphate. tRNA 3'-terminal CCA addition is required both for tRNA processing and repair. Also involved in tRNA surveillance by mediating tandem CCA addition to generate a CCACCA at the 3' terminus of unstable tRNAs. While stable tRNAs receive only 3'-terminal CCA, unstable tRNAs are marked with CCACCA and rapidly degraded. The chain is Multifunctional CCA protein from Photorhabdus laumondii subsp. laumondii (strain DSM 15139 / CIP 105565 / TT01) (Photorhabdus luminescens subsp. laumondii).